We begin with the raw amino-acid sequence, 269 residues long: Cbp/p300-interacting transactivator 2 (269 aa).

A disordered region spans residues 142-200 (AGHQMNGTNQHFRDCNPKHSGGSSTPGGAGGSGTPGGSGGTSGGAGGSSAGGSGGGSTM). The span at 165 to 198 (STPGGAGGSGTPGGSGGTSGGAGGSSAGGSGGGS) shows a compositional bias: gly residues.

The protein belongs to the CITED family. As to quaternary structure, interacts (via C-terminus) with EP300 (via CH1 domain); the interaction is stimulated in response to hypoxia. Interacts with PPARA. Interacts (via C-terminus) with TFAP2A, TFAP2B and TFAP2C. Interacts (via C-terminus) with SMAD2. Interacts (via C-terminus) with SMAD3 (via MH2 domain). Interacts with LHX2 (via LIM domains). Interacts with WT1 isoform 1 and isoform 3. Ubiquitous.

The protein resides in the nucleus. Transcriptional coactivator of the p300/CBP-mediated transcription complex. Acts as a bridge, linking TFAP2 transcription factors and the p300/CBP transcriptional coactivator complex in order to stimulate TFAP2-mediated transcriptional activation. Positively regulates TGF-beta signaling through its association with the SMAD/p300/CBP-mediated transcriptional coactivator complex. Stimulates the peroxisome proliferator-activated receptors PPARA transcriptional activity. Enhances estrogen-dependent transactivation mediated by estrogen receptors. Also acts as a transcriptional corepressor; interferes with the binding of the transcription factors HIF1A or STAT2 and the p300/CBP transcriptional coactivator complex. Participates in sex determination and early gonad development by stimulating transcription activation of SRY. Plays a role in controlling left-right patterning during embryogenesis; potentiates transcriptional activation of NODAL-mediated gene transcription in the left lateral plate mesoderm (LPM). Plays an essential role in differentiation of the adrenal cortex from the adrenogonadal primordium (AGP); stimulates WT1-mediated transcription activation thereby up-regulating the nuclear hormone receptor NR5A1 promoter activity. Associates with chromatin to the PITX2 P1 promoter region. This Mus musculus (Mouse) protein is Cbp/p300-interacting transactivator 2 (Cited2).